Here is a 471-residue protein sequence, read N- to C-terminus: Chitobiosyldiphosphodolichol beta-mannosyltransferase (471 aa).

Topologically, residues methionine 1–serine 31 are lumenal. A helical transmembrane segment spans residues tryptophan 32–proline 52. Over tyrosine 53–lysine 126 the chain is Cytoplasmic. Positions serine 127–tryptophan 147 form an intramembrane region, helical. Residues glutamate 148–serine 471 are Cytoplasmic-facing.

The protein belongs to the glycosyltransferase group 1 family.

It is found in the endoplasmic reticulum membrane. It carries out the reaction an N,N'-diacetylchitobiosyl-diphospho-di-trans,poly-cis-dolichol + GDP-alpha-D-mannose = a beta-D-Man-(1-&gt;4)-beta-D-GlcNAc-(1-&gt;4)-alpha-D-GlcNAc-diphospho-di-trans,poly-cis-dolichol + GDP + H(+). It functions in the pathway protein modification; protein glycosylation. Its function is as follows. Participates in the formation of the lipid-linked precursor oligosaccharide for N-glycosylation. Involved in assembling the dolichol-pyrophosphate-GlcNAc(2)-Man(5) intermediate on the cytoplasmic surface of the ER. The chain is Chitobiosyldiphosphodolichol beta-mannosyltransferase (ALG1) from Eremothecium gossypii (strain ATCC 10895 / CBS 109.51 / FGSC 9923 / NRRL Y-1056) (Yeast).